The chain runs to 256 residues: MGRGRVQLKRIENKINRQVTFSKRRAGLMKKAHEISVLCDAEVALVVFSHKGKLFEYSTDSCMEKILERYERYSYAERQLIAPESDSNTNWSMEYNRLKAKIELLERNQRHYLGEDLQAMSPKELQNLEQQLDTALKHIRSRKNQLMYDSINELQRKEKAIQEQNSMLSKQIKERENVLRAQQEQWDEQNHGHNMPPPPPPQQHQIQHPYMLSHQPSPFLNMGGLYQEEDQMAMRRNDLDLSLEPVYNCNLGCFAA.

Residues 1–61 form the MADS-box domain; that stretch reads MGRGRVQLKR…GKLFEYSTDS (61 aa). Residues 88 to 178 enclose the K-box domain; the sequence is NTNWSMEYNR…SKQIKERENV (91 aa). The interval 187-206 is disordered; that stretch reads DEQNHGHNMPPPPPPQQHQI.

As to quaternary structure, homodimer capable of binding to CArG-box sequences.

The protein resides in the nucleus. Its function is as follows. Transcription factor that promotes early floral meristem identity in synergy with LEAFY. Displays a redundant function with CAULIFLOWER in the up-regulation of LEAFY. Required subsequently for the transition of an inflorescence meristem into a floral meristem, and for the normal development of sepals and petals in flowers. Regulates positively B class homeotic proteins. The sequence is that of Floral homeotic protein APETALA 1-2 (2AP1) from Brassica oleracea var. italica (Broccoli).